Reading from the N-terminus, the 385-residue chain is Rhomboid domain-containing protein 3 (385 aa).

Transmembrane regions (helical) follow at residues 13–33 (ALPL…LLGA), 58–78 (LGHT…TLGW), 95–115 (VLAL…VSGA), 146–166 (WLLP…PPFL), and 168–188 (LLCG…WLEL). A disordered region spans residues 238–264 (PPYLASSDSWPHSDGSAQLPPRLGPGQ). A UBA domain is found at 322–361 (SVSSLRLQQLQHMGFPTEQAAVALAATGRVEGAVSLLVEG).

Its subcellular location is the membrane. The sequence is that of Rhomboid domain-containing protein 3 (Rhbdd3) from Mus musculus (Mouse).